We begin with the raw amino-acid sequence, 117 residues long: Acrylate reductase cytochrome subunit (117 aa).

A signal peptide spans 1–22 (MKMYKLMLGLVLAGLVSLSAQA). Heme c contacts are provided by histidine 29, cysteine 37, cysteine 40, histidine 41, cysteine 54, cysteine 57, histidine 58, histidine 79, histidine 83, cysteine 90, cysteine 93, histidine 94, histidine 97, cysteine 104, cysteine 107, and histidine 108.

In terms of assembly, the ArdAB flavocytochrome c is composed of a FAD-containing subunit (ArdA) and a heme c-containing subunit (ArdB). It depends on heme c as a cofactor.

The protein resides in the periplasm. Methacrylate acts as a competitive inhibitor of the acrylate reductase activity and suppresses the reductase activity in dose-dependent manner. Heme c-containing subunit of the ArdAB flavocytochrome c, which catalyzes the reduction of acrylate to propanoate and supports dimethylsulfoniopropionate-dependent anaerobic respiration. In vitro, can use the artificial electron donor methyl viologen. The natural electron donor is probably a low-potential cytochrome c. Also shows weak activity toward methacrylate in vitro (at a 22-fold lower rate) but cannot use other tested 2-enoates, including crotonic, fumaric, sorbic, urocanic, cinnamic, p-coumaric, caffeic or ferulic acids. The protein catalyzes a unidirectional reaction and cannot oxidize propanoate with phenazine metasulfate and dichlorophenolindophenol as electron acceptors. The polypeptide is Acrylate reductase cytochrome subunit (Shewanella woodyi (strain ATCC 51908 / MS32)).